Reading from the N-terminus, the 449-residue chain is tRNA-2-methylthio-N(6)-dimethylallyladenosine synthase (449 aa).

In terms of domain architecture, MTTase N-terminal spans 3–118 (KKVFVKTFGC…LPELLAQREA (116 aa)). [4Fe-4S] cluster contacts are provided by Cys-12, Cys-49, Cys-81, Cys-155, Cys-159, and Cys-162. Residues 141–376 (RVEGASAFVS…VINANIKSIS (236 aa)) enclose the Radical SAM core domain. In terms of domain architecture, TRAM spans 377–440 (ESRVGTVQRI…AYTLRGEVVT (64 aa)).

This sequence belongs to the methylthiotransferase family. MiaB subfamily. As to quaternary structure, monomer. The cofactor is [4Fe-4S] cluster.

The protein resides in the cytoplasm. The enzyme catalyses N(6)-dimethylallyladenosine(37) in tRNA + (sulfur carrier)-SH + AH2 + 2 S-adenosyl-L-methionine = 2-methylsulfanyl-N(6)-dimethylallyladenosine(37) in tRNA + (sulfur carrier)-H + 5'-deoxyadenosine + L-methionine + A + S-adenosyl-L-homocysteine + 2 H(+). In terms of biological role, catalyzes the methylthiolation of N6-(dimethylallyl)adenosine (i(6)A), leading to the formation of 2-methylthio-N6-(dimethylallyl)adenosine (ms(2)i(6)A) at position 37 in tRNAs that read codons beginning with uridine. The sequence is that of tRNA-2-methylthio-N(6)-dimethylallyladenosine synthase from Paracidovorax citrulli (strain AAC00-1) (Acidovorax citrulli).